Here is a 391-residue protein sequence, read N- to C-terminus: Casein kinase II subunit alpha (391 aa).

The interval 36-41 is interaction with beta subunit; that stretch reads QDDYQL. Residues 39 to 324 enclose the Protein kinase domain; sequence YQLVRKLGRG…AREAMEHPYF (286 aa). ATP is bound by residues 45–53 and Lys68; that span reads LGRGKYSEV. The active-site Proton acceptor is Asp156. Thr344 and Thr360 each carry phosphothreonine; by CDK1. A phosphoserine; by CDK1 mark is found at Ser362 and Ser370.

Belongs to the protein kinase superfamily. Ser/Thr protein kinase family. CK2 subfamily. Heterotetramer composed of two catalytic subunits (alpha chain and/or alpha' chain) and two regulatory subunits (beta chains). The tetramer can exist as a combination of 2 alpha/2 beta, 2 alpha'/2 beta or 1 alpha/1 alpha'/2 beta subunits. Also part of a CK2-SPT16-SSRP1 complex composed of SSRP1, SUPT16H, CSNK2A1, CSNK2A2 and CSNK2B, which forms following UV irradiation. Interacts with RNPS1. Interacts with SNAI1. Interacts with PML. Interacts with CCAR2. Interacts with HIRIP3. Post-translationally, phosphorylated at Thr-344, Thr-360, Ser-362 and Ser-370 by CDK1 in prophase and metaphase and dephosphorylated during anaphase. Phosphorylation does not directly affect casein kinase 2 activity, but may contribute to its regulation by forming binding sites for interacting proteins and/or targeting it to different compartments.

The protein localises to the nucleus. The catalysed reaction is L-seryl-[protein] + ATP = O-phospho-L-seryl-[protein] + ADP + H(+). It catalyses the reaction L-threonyl-[protein] + ATP = O-phospho-L-threonyl-[protein] + ADP + H(+). With respect to regulation, constitutively active protein kinase whose activity is not directly affected by phosphorylation. Seems to be regulated by level of expression and localization. In terms of biological role, catalytic subunit of a constitutively active serine/threonine-protein kinase complex that phosphorylates a large number of substrates containing acidic residues C-terminal to the phosphorylated serine or threonine. Regulates numerous cellular processes, such as cell cycle progression, apoptosis and transcription, as well as viral infection. May act as a regulatory node which integrates and coordinates numerous signals leading to an appropriate cellular response. During mitosis, functions as a component of the p53/TP53-dependent spindle assembly checkpoint (SAC) that maintains cyclin-B-CDK1 activity and G2 arrest in response to spindle damage. Also required for p53/TP53-mediated apoptosis, phosphorylating 'Ser-392' of p53/TP53 following UV irradiation. Phosphorylates a number of DNA repair proteins in response to DNA damage, such as MDC1, MRE11, RAD9A, RAD51 and HTATSF1, promoting their recruitment to DNA damage sites. Can also negatively regulate apoptosis. Phosphorylates the caspases CASP9 and CASP2 and the apoptotic regulator NOL3. Phosphorylation protects CASP9 from cleavage and activation by CASP8, and inhibits the dimerization of CASP2 and activation of CASP8. Phosphorylates YY1, protecting YY1 from cleavage by CASP7 during apoptosis. Regulates transcription by direct phosphorylation of RNA polymerases I, II, III and IV. Also phosphorylates and regulates numerous transcription factors including NF-kappa-B, STAT1, CREB1, IRF1, IRF2, ATF1, ATF4, SRF, MAX, JUN, FOS, MYC and MYB. Phosphorylates Hsp90 and its co-chaperones FKBP4 and CDC37, which is essential for chaperone function. Mediates sequential phosphorylation of FNIP1, promoting its gradual interaction with Hsp90, leading to activate both kinase and non-kinase client proteins of Hsp90. Regulates Wnt signaling by phosphorylating CTNNB1 and the transcription factor LEF1. Acts as an ectokinase that phosphorylates several extracellular proteins. Plays an important role in the circadian clock function by phosphorylating BMAL1 at 'Ser-90' which is pivotal for its interaction with CLOCK and which controls CLOCK nuclear entry. Phosphorylates FMR1, promoting FMR1-dependent formation of a membraneless compartment. May phosphorylate histone H2A on 'Ser-1'. The protein is Casein kinase II subunit alpha (CSNK2A1) of Bos taurus (Bovine).